The following is a 527-amino-acid chain: Probable protein kinase UbiB (527 aa).

Residues 23 to 43 (ELLLELPLPFWLRALSWLLPW) traverse the membrane as a helical segment. One can recognise a Protein kinase domain in the interval 125 to 488 (RFDSQPLASA…ESDARDQWPL (364 aa)). Residues 131–139 (LASASVAQV) and lysine 153 each bind ATP. Aspartate 288 functions as the Proton acceptor in the catalytic mechanism. The chain crosses the membrane as a helical span at residues 504–524 (LAPLLATWPAWLMVGGGLYLV).

This sequence belongs to the ABC1 family. UbiB subfamily.

The protein localises to the cell inner membrane. Its pathway is cofactor biosynthesis; ubiquinone biosynthesis [regulation]. Is probably a protein kinase regulator of UbiI activity which is involved in aerobic coenzyme Q (ubiquinone) biosynthesis. This is Probable protein kinase UbiB from Ectopseudomonas mendocina (strain ymp) (Pseudomonas mendocina).